The sequence spans 142 residues: Hemoglobin subunit alpha-2 (142 aa).

In terms of domain architecture, Globin spans 2 to 142 (VLSAADKSNI…VSTVLTSKYR (141 aa)). Position 59 (His-59) interacts with O2. Position 88 (His-88) interacts with heme b.

The protein belongs to the globin family. In terms of assembly, heterotetramer of two alpha chains and two beta chains. In terms of tissue distribution, red blood cells.

Functionally, involved in oxygen transport from the lung to the various peripheral tissues. The protein is Hemoglobin subunit alpha-2 of Bubalus bubalis (Domestic water buffalo).